The chain runs to 117 residues: Glycine cleavage system H-like protein (117 aa).

The Lipoyl-binding domain occupies 21–103; it reads IVKLGLSSQM…ESEGWFVVLQ (83 aa). Lysine 62 carries the N6-lipoyllysine modification.

Belongs to the GcvH family. It depends on (R)-lipoate as a cofactor.

This Chlamydia trachomatis serovar D (strain ATCC VR-885 / DSM 19411 / UW-3/Cx) protein is Glycine cleavage system H-like protein.